A 591-amino-acid chain; its full sequence is Serine/threonine-protein kinase Nek2 (591 aa).

The Protein kinase domain occupies 4 to 258; that stretch reads YEVLEQIGKG…AAQLLKHPQL (255 aa). ATP-binding positions include 10 to 18 and K33; that span reads IGKGAFGSA. D129 functions as the Proton acceptor in the catalytic mechanism. 3 disordered regions span residues 309–331, 382–408, and 500–534; these read LGNE…SSTR, ARNQ…TTPN, and RTDG…DTSS. 2 stretches are compositionally biased toward polar residues: residues 391-408 and 504-534; these read TSYN…TTPN and DNGS…DTSS.

It belongs to the protein kinase superfamily. NEK Ser/Thr protein kinase family. NIMA subfamily. In terms of tissue distribution, expressed in anthers, pistils and leaves.

It catalyses the reaction L-seryl-[protein] + ATP = O-phospho-L-seryl-[protein] + ADP + H(+). The catalysed reaction is L-threonyl-[protein] + ATP = O-phospho-L-threonyl-[protein] + ADP + H(+). Its function is as follows. May be involved in plant development processes. The protein is Serine/threonine-protein kinase Nek2 of Oryza sativa subsp. japonica (Rice).